A 180-amino-acid chain; its full sequence is DNA-directed RNA polymerase subunit Rpo7 (180 aa).

The S1 motif domain occupies glutamine 82–arginine 165.

This sequence belongs to the eukaryotic RPB7/RPC8 RNA polymerase subunit family. Part of the 13-subunit RNA polymerase complex. Forms a stalk with Rpo4 that extends from the main structure.

The protein resides in the cytoplasm. The catalysed reaction is RNA(n) + a ribonucleoside 5'-triphosphate = RNA(n+1) + diphosphate. Its function is as follows. DNA-dependent RNA polymerase (RNAP) catalyzes the transcription of DNA into RNA using the four ribonucleoside triphosphates as substrates. This chain is DNA-directed RNA polymerase subunit Rpo7, found in Saccharolobus solfataricus (strain ATCC 35092 / DSM 1617 / JCM 11322 / P2) (Sulfolobus solfataricus).